Consider the following 83-residue polypeptide: RNA-binding protein Hfq (83 aa).

In terms of domain architecture, Sm spans 10 to 70 (DTFLNQVRKE…ISTVMPLRPI (61 aa)).

The protein belongs to the Hfq family. As to quaternary structure, homohexamer.

Its function is as follows. RNA chaperone that binds small regulatory RNA (sRNAs) and mRNAs to facilitate mRNA translational regulation in response to envelope stress, environmental stress and changes in metabolite concentrations. Also binds with high specificity to tRNAs. The polypeptide is RNA-binding protein Hfq (Desulfitobacterium hafniense (strain Y51)).